A 35-amino-acid chain; its full sequence is Photosystem II reaction center protein M (35 aa).

The chain crosses the membrane as a helical span at residues 5-25 (ILGLIATALFILIPTSFLIIL).

It belongs to the PsbM family. In terms of assembly, PSII is composed of 1 copy each of membrane proteins PsbA, PsbB, PsbC, PsbD, PsbE, PsbF, PsbH, PsbI, PsbJ, PsbK, PsbL, PsbM, PsbT, PsbX, PsbY, PsbZ, Psb30/Ycf12, at least 3 peripheral proteins of the oxygen-evolving complex and a large number of cofactors. It forms dimeric complexes.

The protein localises to the plastid. It localises to the chloroplast thylakoid membrane. Functionally, one of the components of the core complex of photosystem II (PSII). PSII is a light-driven water:plastoquinone oxidoreductase that uses light energy to abstract electrons from H(2)O, generating O(2) and a proton gradient subsequently used for ATP formation. It consists of a core antenna complex that captures photons, and an electron transfer chain that converts photonic excitation into a charge separation. This subunit is found at the monomer-monomer interface. The chain is Photosystem II reaction center protein M from Oltmannsiellopsis viridis (Marine flagellate).